The following is a 63-amino-acid chain: Bowman-Birk type proteinase inhibitor (63 aa).

Disulfide bonds link cysteine 8/cysteine 61, cysteine 9/cysteine 24, cysteine 12/cysteine 57, cysteine 14/cysteine 22, cysteine 31/cysteine 38, cysteine 35/cysteine 50, and cysteine 40/cysteine 48.

The protein belongs to the Bowman-Birk serine protease inhibitor family.

This inhibitor has two domains, each with separate antiprotease activity. Inhibits bovine trypsin and chymotrypsin, in a molar ratio of 1:1. The trypsin inhibition of FBI is independent of chymotrypsin inhibition, but the chymotrypsin inhibition is not completely independent of trypsin inhibition. The protein is Bowman-Birk type proteinase inhibitor of Vicia faba (Broad bean).